A 261-amino-acid polypeptide reads, in one-letter code: MAFADKPNHFINFPLAQFSGFMGKYLKLQSQLVEMGLDCKLQKAPHVSITLLDIKADQYKQVEFAIQEIIDDLAAYEGDIVFDNPHMLGRCLVLDVRGFEELHEDIVEILRRRGCTADQSRHWIPHCTVAQFDEERETKGMQFYHKEPFYLKHNNLLTDAGLELVKIGSSKIDGFYCSELSVWCGERLCYKPPTPKFSDIFGYCCIDKIRGDLEIGDLPQDDEEAWAELSYHYQRNTYFFRHVHDNSIYFRTVCRMKGCMC.

Belongs to the coronaviruses ns2a protein family.

It is found in the host cytoplasm. In terms of biological role, not essential for virus replication in transformed murine cells. The protein is Non-structural protein 2a of Mus musculus (Mouse).